The chain runs to 986 residues: Bifunctional glutamine synthetase adenylyltransferase/adenylyl-removing enzyme (986 aa).

Residues M1–E482 are adenylyl removase. The interval S486–G986 is adenylyl transferase.

The protein belongs to the GlnE family. Mg(2+) is required as a cofactor.

The catalysed reaction is [glutamine synthetase]-O(4)-(5'-adenylyl)-L-tyrosine + phosphate = [glutamine synthetase]-L-tyrosine + ADP. The enzyme catalyses [glutamine synthetase]-L-tyrosine + ATP = [glutamine synthetase]-O(4)-(5'-adenylyl)-L-tyrosine + diphosphate. Its function is as follows. Involved in the regulation of glutamine synthetase GlnA, a key enzyme in the process to assimilate ammonia. When cellular nitrogen levels are high, the C-terminal adenylyl transferase (AT) inactivates GlnA by covalent transfer of an adenylyl group from ATP to specific tyrosine residue of GlnA, thus reducing its activity. Conversely, when nitrogen levels are low, the N-terminal adenylyl removase (AR) activates GlnA by removing the adenylyl group by phosphorolysis, increasing its activity. The regulatory region of GlnE binds the signal transduction protein PII (GlnB) which indicates the nitrogen status of the cell. In Caulobacter vibrioides (strain ATCC 19089 / CIP 103742 / CB 15) (Caulobacter crescentus), this protein is Bifunctional glutamine synthetase adenylyltransferase/adenylyl-removing enzyme.